A 612-amino-acid chain; its full sequence is Elongation factor 4 (612 aa).

Residues 11–193 (KHIRNFSIVA…EIVKKVPAPN (183 aa)) enclose the tr-type G domain. Residues 23–28 (DHGKST) and 140–143 (NKID) contribute to the GTP site.

It belongs to the TRAFAC class translation factor GTPase superfamily. Classic translation factor GTPase family. LepA subfamily.

It is found in the cell membrane. The enzyme catalyses GTP + H2O = GDP + phosphate + H(+). In terms of biological role, required for accurate and efficient protein synthesis under certain stress conditions. May act as a fidelity factor of the translation reaction, by catalyzing a one-codon backward translocation of tRNAs on improperly translocated ribosomes. Back-translocation proceeds from a post-translocation (POST) complex to a pre-translocation (PRE) complex, thus giving elongation factor G a second chance to translocate the tRNAs correctly. Binds to ribosomes in a GTP-dependent manner. This chain is Elongation factor 4, found in Lactobacillus gasseri (strain ATCC 33323 / DSM 20243 / BCRC 14619 / CIP 102991 / JCM 1131 / KCTC 3163 / NCIMB 11718 / NCTC 13722 / AM63).